The primary structure comprises 292 residues: Glycine-rich RNA-binding protein RZ1B (292 aa).

The region spanning 12-90 (SRIFVGGLSW…KVISVNKAEP (79 aa)) is the RRM domain. The residue at position 20 (Ser-20) is a Phosphoserine. Positions 93–114 (GGEDVDQLKKGGGYSSRGKGTE) are disordered. Residues 117-132 (CFKCRRPGHWARDCPS) form a CCHC-type zinc finger. Basic and acidic residues-rich tracts occupy residues 180-210 (DGRR…HYPF) and 220-268 (FVSD…EGRP). The tract at residues 180–292 (DGRRDRDGGR…GGRPSSYERW (113 aa)) is disordered.

As to expression, expressed in roots, rosette and cauline leaves, stems, floral buds and flowers.

Its subcellular location is the nucleus. Binds RNA and DNA sequences non-specifically. May be involved in tolerance to cold stress. This chain is Glycine-rich RNA-binding protein RZ1B, found in Arabidopsis thaliana (Mouse-ear cress).